A 346-amino-acid polypeptide reads, in one-letter code: Phosphate acyltransferase (346 aa).

It belongs to the PlsX family. Homodimer. Probably interacts with PlsY.

Its subcellular location is the cytoplasm. It catalyses the reaction a fatty acyl-[ACP] + phosphate = an acyl phosphate + holo-[ACP]. The protein operates within lipid metabolism; phospholipid metabolism. In terms of biological role, catalyzes the reversible formation of acyl-phosphate (acyl-PO(4)) from acyl-[acyl-carrier-protein] (acyl-ACP). This enzyme utilizes acyl-ACP as fatty acyl donor, but not acyl-CoA. The protein is Phosphate acyltransferase of Deinococcus geothermalis (strain DSM 11300 / CIP 105573 / AG-3a).